Reading from the N-terminus, the 54-residue chain is UPF0235 protein in proC 3'region (54 aa).

The protein belongs to the UPF0235 family.

The sequence is that of UPF0235 protein in proC 3'region from Vibrio alginolyticus.